We begin with the raw amino-acid sequence, 110 residues long: BolA-like protein 3 (110 aa).

This sequence belongs to the BolA/IbaG family. In terms of assembly, interacts with NFU1.

The protein resides in the mitochondrion. In terms of biological role, acts as a mitochondrial iron-sulfur (Fe-S) cluster assembly factor that facilitates (Fe-S) cluster insertion into a subset of mitochondrial proteins. Probably acts together with NFU1. This chain is BolA-like protein 3 (Bola3), found in Mus musculus (Mouse).